A 957-amino-acid chain; its full sequence is Glycine dehydrogenase (decarboxylating) (957 aa).

Lys702 is subject to N6-(pyridoxal phosphate)lysine.

The protein belongs to the GcvP family. The glycine cleavage system is composed of four proteins: P, T, L and H. Pyridoxal 5'-phosphate serves as cofactor.

It catalyses the reaction N(6)-[(R)-lipoyl]-L-lysyl-[glycine-cleavage complex H protein] + glycine + H(+) = N(6)-[(R)-S(8)-aminomethyldihydrolipoyl]-L-lysyl-[glycine-cleavage complex H protein] + CO2. Functionally, the glycine cleavage system catalyzes the degradation of glycine. The P protein binds the alpha-amino group of glycine through its pyridoxal phosphate cofactor; CO(2) is released and the remaining methylamine moiety is then transferred to the lipoamide cofactor of the H protein. The chain is Glycine dehydrogenase (decarboxylating) from Bradyrhizobium sp. (strain ORS 278).